We begin with the raw amino-acid sequence, 84 residues long: Hepcidin (84 aa).

Positions 1–24 are cleaved as a signal peptide; the sequence is MALSSQIWAACLLLLLLLASLTSG. Residues 25–54 constitute a propeptide that is removed on maturation; sequence SVFPQQTGQLAELQPQDRAGARASWMPMFQ. 4 disulfide bridges follow: Cys-66–Cys-82, Cys-69–Cys-72, Cys-70–Cys-78, and Cys-73–Cys-81.

Belongs to the hepcidin family. As to quaternary structure, interacts with SLC40A1; this interaction promotes SLC40A1 rapid ubiquitination. In terms of tissue distribution, highest expression in liver and to a lesser extent in heart and brain. Low levels in lung, tonsils, salivary gland, trachea, prostate gland, adrenal gland and thyroid gland. Secreted into the urine and blood. Expressed by hepatocytes.

The protein localises to the secreted. Its function is as follows. Liver-produced hormone that constitutes the main circulating regulator of iron absorption and distribution across tissues. Acts by promoting endocytosis and degradation of ferroportin/SLC40A1, leading to the retention of iron in iron-exporting cells and decreased flow of iron into plasma. Controls the major flows of iron into plasma: absorption of dietary iron in the intestine, recycling of iron by macrophages, which phagocytose old erythrocytes and other cells, and mobilization of stored iron from hepatocytes. Has strong antimicrobial activity against E.coli ML35P N.cinerea and weaker against S.epidermidis, S.aureus and group b streptococcus bacteria. Active against the fungus C.albicans. No activity against P.aeruginosa. In Homo sapiens (Human), this protein is Hepcidin.